Reading from the N-terminus, the 343-residue chain is UPF0284 protein Msed_0735 (343 aa).

This sequence belongs to the UPF0284 family.

In Metallosphaera sedula (strain ATCC 51363 / DSM 5348 / JCM 9185 / NBRC 15509 / TH2), this protein is UPF0284 protein Msed_0735.